The sequence spans 604 residues: Sulfite reductase [NADPH] flavoprotein alpha-component (604 aa).

One can recognise a Flavodoxin-like domain in the interval 65 to 203 (VTILYGSQTG…AAGQWHADVL (139 aa)). FMN is bound by residues 71-76 (SQTGNG), 118-121 (STHG), and 154-163 (LGDSSYEFFC). The FAD-binding FR-type domain maps to 236 to 453 (QNPYSAEVLV…VEPNKHFRLP (218 aa)). FAD is bound by residues T324, L358, 392 to 395 (RLYS), 410 to 412 (TVA), and 425 to 428 (GGAS). Residues 524–525 (SR), 530–534 (KIYVQ), and D566 contribute to the NADP(+) site. Y604 contacts FAD.

Belongs to the NADPH-dependent sulphite reductase flavoprotein subunit CysJ family. It in the N-terminal section; belongs to the flavodoxin family. The protein in the C-terminal section; belongs to the flavoprotein pyridine nucleotide cytochrome reductase family. Alpha(8)-beta(8). The alpha component is a flavoprotein, the beta component is a hemoprotein. FAD serves as cofactor. It depends on FMN as a cofactor.

It catalyses the reaction hydrogen sulfide + 3 NADP(+) + 3 H2O = sulfite + 3 NADPH + 4 H(+). It functions in the pathway sulfur metabolism; hydrogen sulfide biosynthesis; hydrogen sulfide from sulfite (NADPH route): step 1/1. Functionally, component of the sulfite reductase complex that catalyzes the 6-electron reduction of sulfite to sulfide. This is one of several activities required for the biosynthesis of L-cysteine from sulfate. The flavoprotein component catalyzes the electron flow from NADPH -&gt; FAD -&gt; FMN to the hemoprotein component. In Shewanella sp. (strain MR-7), this protein is Sulfite reductase [NADPH] flavoprotein alpha-component.